We begin with the raw amino-acid sequence, 415 residues long: Actin-like protein 7B (415 aa).

Residues 1 to 31 (MATRNSPMPLGTAQGDPGEAGTRPGPDASLR) form a disordered region. At serine 6 the chain carries Phosphoserine.

Belongs to the actin family. In terms of tissue distribution, detected only in the testis and, to a lesser extent, in the prostate.

It is found in the cytoplasm. The protein resides in the cytoskeleton. The chain is Actin-like protein 7B (ACTL7B) from Homo sapiens (Human).